We begin with the raw amino-acid sequence, 1370 residues long: Insulin-like growth factor 1 receptor (1370 aa).

The N-terminal stretch at 1–30 (MKSGSGGGSPTSLWGLVFLSAALSLWPTSG) is a signal peptide. Cysteine 33 and cysteine 52 form a disulfide bridge. 3 N-linked (GlcNAc...) asparagine glycosylation sites follow: asparagine 51, asparagine 102, and asparagine 135. 13 disulfide bridges follow: cysteine 150–cysteine 178, cysteine 182–cysteine 205, cysteine 192–cysteine 211, cysteine 215–cysteine 224, cysteine 219–cysteine 230, cysteine 231–cysteine 239, cysteine 235–cysteine 248, cysteine 251–cysteine 260, cysteine 264–cysteine 276, cysteine 282–cysteine 303, cysteine 307–cysteine 321, cysteine 324–cysteine 328, and cysteine 332–cysteine 354. N-linked (GlcNAc...) asparagine glycosylation is present at asparagine 245. Asparagine 314 carries N-linked (GlcNAc...) asparagine glycosylation. Asparagine 418 and asparagine 439 each carry an N-linked (GlcNAc...) asparagine glycan. Residues cysteine 456 and cysteine 489 are joined by a disulfide bond. Fibronectin type-III domains lie at 490–610 (ESDV…TNAS) and 611–709 (VPSI…TEAE). N-linked (GlcNAc...) asparagine glycosylation is found at asparagine 535, asparagine 608, asparagine 623, asparagine 641, asparagine 748, asparagine 757, asparagine 765, asparagine 901, and asparagine 914. The Extracellular segment spans residues 742-936 (DVLQVANTTM…AKTTYENFMH (195 aa)). The region spanning 835–928 (IPGPVTWEPR…DPVFFYVPAK (94 aa)) is the Fibronectin type-III 3 domain. The helical transmembrane segment at 937–960 (LIIALPVAILLIVGGLVIMLYVFH) threads the bilayer. The Cytoplasmic portion of the chain corresponds to 961 to 1370 (RKRNNSRLGN…ALPLPQSSTC (410 aa)). The IRS1- and SHC1-binding motif lies at 978 to 981 (NPEY). At tyrosine 981 the chain carries Phosphotyrosine. Positions 1000-1275 (ITMNRELGQG…SIKDEMEPSF (276 aa)) constitute a Protein kinase domain. ATP is bound by residues 1006–1014 (LGQGSFGMV) and lysine 1034. Aspartate 1136 serves as the catalytic Proton acceptor. Residues tyrosine 1162, tyrosine 1166, and tyrosine 1167 each carry the phosphotyrosine; by autocatalysis modification. Residues lysine 1169 and lysine 1172 each participate in a glycyl lysine isopeptide (Lys-Gly) (interchain with G-Cter in ubiquitin) cross-link. Residue serine 1279 is modified to Phosphoserine; by GSK3-beta. Position 1283 is a phosphoserine (serine 1283). Residues 1304-1370 (NMESVPLDPS…ALPLPQSSTC (67 aa)) form a disordered region. Positions 1305-1321 (MESVPLDPSASSASLPL) are enriched in low complexity. Basic and acidic residues predominate over residues 1322-1331 (PERHSGHKAE).

Belongs to the protein kinase superfamily. Tyr protein kinase family. Insulin receptor subfamily. Tetramer of 2 alpha and 2 beta chains linked by disulfide bonds. The alpha chains contribute to the formation of the ligand-binding domain, while the beta chain carries the kinase domain. Interacts with PIK3R1 and with the PTB/PID domains of IRS1 and SHC1 in vitro when autophosphorylated on tyrosine residues. Forms a hybrid receptor with INSR, the hybrid is a tetramer consisting of 1 alpha chain and 1 beta chain of INSR and 1 alpha chain and 1 beta chain of IGF1R. Interacts with ARRB1 and ARRB2. Interacts with GRB10. Interacts with RACK1. Interacts with SOCS1, SOCS2 and SOCS3. Interacts with 14-3-3 proteins. Interacts with NMD2. Interacts with MAP3K5. Interacts with STAT3. Found in a ternary complex with IGF1 and ITGAV:ITGB3 or ITGA6:ITGB4. Interacts (nascent precursor form) with ZFAND2B. Autophosphorylated on tyrosine residues in response to ligand binding. Autophosphorylation occurs in trans, i.e. one subunit of the dimeric receptor phosphorylates tyrosine residues on the other subunit. Autophosphorylation occurs in a sequential manner; Tyr-1166 is predominantly phosphorylated first, followed by phosphorylation of Tyr-1162 and Tyr-1167. While every single phosphorylation increases kinase activity, all three tyrosine residues in the kinase activation loop (Tyr-1162, Tyr-1166 and Tyr-1167) have to be phosphorylated for optimal activity. Can be autophosphorylated at additional tyrosine residues (in vitro). Autophosphorylated is followed by phosphorylation of juxtamembrane tyrosines and C-terminal serines. May also be phosphorylated at Tyr-1162 and Tyr-1167 by mTORC2. Phosphorylation of Tyr-981 is required for IRS1- and SHC1-binding. Phosphorylation of Ser-1279 by GSK-3beta restrains kinase activity and promotes cell surface expression, it requires a priming phosphorylation at Ser-1283. Dephosphorylated by PTPN1. In terms of processing, polyubiquitinated at Lys-1169 and Lys-1172 through both 'Lys-48' and 'Lys-29' linkages, promoting receptor endocytosis and subsequent degradation by the proteasome. Ubiquitination is facilitated by pre-existing phosphorylation. Post-translationally, sumoylated with SUMO1. Controlled by regulated intramembrane proteolysis (RIP). Undergoes metalloprotease-dependent constitutive ectodomain shedding to produce a membrane-anchored 52 kDa C-Terminal fragment which is further processed by presenilin gamma-secretase to yield an intracellular 50 kDa fragment.

The protein localises to the cell membrane. The enzyme catalyses L-tyrosyl-[protein] + ATP = O-phospho-L-tyrosyl-[protein] + ADP + H(+). Its activity is regulated as follows. Activated by autophosphorylation at Tyr-1162, Tyr-1166 and Tyr-1167 on the kinase activation loop; phosphorylation at all three tyrosine residues is required for optimal kinase activity. Inhibited by MSC1609119A-1, BMS-754807, PQIP, benzimidazole pyridinone, isoquinolinedione, bis-azaindole, 3-cyanoquinoline, 2,4-bis-arylamino-1,3-pyrimidine, pyrrolopyrimidine, pyrrole-5-carboxaldehyde, picropodophyllin (PPP), tyrphostin derivatives. While most inhibitors bind to the ATP binding pocket, MSC1609119A-1 functions as allosteric inhibitor and binds close to the DFG motif and the activation loop. Dephosphorylated by PTPN1. Functionally, receptor tyrosine kinase which mediates actions of insulin-like growth factor 1 (IGF1). Binds IGF1 with high affinity and IGF2 and insulin (INS) with a lower affinity. The activated IGF1R is involved in cell growth and survival control. IGF1R is crucial for tumor transformation and survival of malignant cell. Ligand binding activates the receptor kinase, leading to receptor autophosphorylation, and tyrosines phosphorylation of multiple substrates, that function as signaling adapter proteins including, the insulin-receptor substrates (IRS1/2), Shc and 14-3-3 proteins. Phosphorylation of IRSs proteins lead to the activation of two main signaling pathways: the PI3K-AKT/PKB pathway and the Ras-MAPK pathway. The result of activating the MAPK pathway is increased cellular proliferation, whereas activating the PI3K pathway inhibits apoptosis and stimulates protein synthesis. Phosphorylated IRS1 can activate the 85 kDa regulatory subunit of PI3K (PIK3R1), leading to activation of several downstream substrates, including protein AKT/PKB. AKT phosphorylation, in turn, enhances protein synthesis through mTOR activation and triggers the antiapoptotic effects of IGFIR through phosphorylation and inactivation of BAD. In parallel to PI3K-driven signaling, recruitment of Grb2/SOS by phosphorylated IRS1 or Shc leads to recruitment of Ras and activation of the ras-MAPK pathway. In addition to these two main signaling pathways IGF1R signals also through the Janus kinase/signal transducer and activator of transcription pathway (JAK/STAT). Phosphorylation of JAK proteins can lead to phosphorylation/activation of signal transducers and activators of transcription (STAT) proteins. In particular activation of STAT3, may be essential for the transforming activity of IGF1R. The JAK/STAT pathway activates gene transcription and may be responsible for the transforming activity. JNK kinases can also be activated by the IGF1R. IGF1 exerts inhibiting activities on JNK activation via phosphorylation and inhibition of MAP3K5/ASK1, which is able to directly associate with the IGF1R. When present in a hybrid receptor with INSR, binds IGF1. This chain is Insulin-like growth factor 1 receptor (Igf1r), found in Rattus norvegicus (Rat).